A 793-amino-acid polypeptide reads, in one-letter code: Protein smoothened (793 aa).

The N-terminal stretch at 1-30 (MAAGRPVRGPELAPRRLLQLLLLVLLGGRG) is a signal peptide. The Extracellular portion of the chain corresponds to 31–237 (RGAALSGNVT…EAEHQDMHSY (207 aa)). A disordered region spans residues 35-61 (LSGNVTGPGPRSAGGSARRNAPVTSPP). Residue Asn-38 is glycosylated (N-linked (GlcNAc...) asparagine). 5 cysteine pairs are disulfide-bonded: Cys-68–Cys-182, Cys-74–Cys-138, Cys-82–Cys-131, Cys-122–Cys-158, and Cys-151–Cys-173. The FZ domain maps to 69-185 (GRAAHCEPLR…DHFPEGCPNE (117 aa)). Position 99 (Asp-99) interacts with cholesterol. An N-linked (GlcNAc...) asparagine glycan is attached at Asn-192. Intrachain disulfides connect Cys-197–Cys-217, Cys-221–Cys-299, and Cys-318–Cys-394. The chain crosses the membrane as a helical span at residues 238–258 (IAAFGAVTGLCTLFTLATFVA). The Cytoplasmic portion of the chain corresponds to 259–266 (DWRNSNRY). Residues 267–287 (PAVILFYVNACFFVGSIGWLA) form a helical membrane-spanning segment. The Extracellular segment spans residues 288–318 (QFMDGARREIVCRADGTMRFGEPTSSETLSC). Residues 319 to 339 (VIIFVIVYYALMAGVVWFVVL) traverse the membrane as a helical segment. Residues 340–362 (TYAWHTSFKALGTTYQPLSGKTS) lie on the Cytoplasmic side of the membrane. Residues 363-383 (YFHLLTWSLPFVLTVAILAVA) form a helical membrane-spanning segment. Over 384-406 (QVDGDSVSGICFVGYKNYRYRAG) the chain is Extracellular. Tyr-398 contacts cholesterol. The chain crosses the membrane as a helical span at residues 407-427 (FVLAPIGLVLIVGGYFLIRGV). Residues 428–455 (MTLFSIKSNHPGLLSEKAASKINETMLR) lie on the Cytoplasmic side of the membrane. The chain crosses the membrane as a helical span at residues 456-476 (LGIFGFLAFGFVLITFSCHFY). Topologically, residues 477 to 528 (DFFNQAEWERSFRDYVLCQANVTIGLPTKKPIPDCEIKNRPSLLVEKINLFA) are extracellular. A disulfide bridge links Cys-494 with Cys-511. N-linked (GlcNAc...) asparagine glycosylation occurs at Asn-497. Residues 529–549 (MFGTGIAMSTWVWTKATLLIW) traverse the membrane as a helical segment. An interaction with BBS5 and BBS7 region spans residues 542–573 (TKATLLIWRRTWCRLTGHSDDEPKRIKKSKMI). Residues 550-793 (RRTWCRLTGH…AELLDADSDF (244 aa)) are Cytoplasmic-facing. Residues Ser-560, Ser-578, and Ser-594 each carry the phosphoserine modification. The tract at residues 574–657 (AKAFSKRREL…TPVPPEEQAN (84 aa)) is required for interaction with PRKACA. Residues 585–597 (QNPGQELSFSMHT) form an interaction with DLG5 region. Thr-597 is subject to Phosphothreonine. Residues Ser-599 and Ser-642 each carry the phosphoserine modification. Phosphothreonine is present on residues Thr-644 and Thr-648. Ser-666 carries the post-translational modification Phosphoserine. Residues 674 to 684 (GRKKKRRKRKK) are compositionally biased toward basic residues. The disordered stretch occupies residues 674 to 702 (GRKKKRRKRKKEVCPLGPAPELHHSAPVP).

The protein belongs to the G-protein coupled receptor Fz/Smo family. In terms of assembly, homodimer. Interacts (via C-terminus) with protein kinase A catalytic subunit PRKACA; interacts with free PRKACA subunits and the interaction leads to sequestration of PRKACA at the membrane, preventing PRKACA-mediated phosphorylation of GLI transcription factors. Interacts with ARRB2. Interacts with KIF7. Interacts with BBS5 and BBS7; the interactions are indicative for the association of SMO with the BBsome complex to facilitate ciliary localization of SMO. Interacts with DLG5 and SDCBP. Interacts with GAS8/DRC4. Post-translationally, phosphorylation by GRK kinases is required for interaction with protein kinase A catalytic subunit PRKACA. As to expression, in embryo, found in the early neural folds and neural tube, pre-somitic mesoderm and somites, developing limb bud, gut, eye, testes, cartilage, muscle, lung, epiglottis, thymus, tongue, jaw, taste buds, teeth, and skin. In adult, found in multiple tissues including heart, brain, liver, lung, skeletal muscle, kidney and testis.

Its subcellular location is the cell membrane. It localises to the cell projection. It is found in the cilium. Functionally, g protein-coupled receptor which associates with the patched protein (PTCH) to transduce hedgehog protein signaling. Binding of sonic hedgehog (SHH) to its receptor patched prevents inhibition of smoothened (SMO) by patched. When active, SMO binds to and sequesters protein kinase A catalytic subunit PRKACA at the cell membrane, preventing PRKACA-mediated phosphorylation of GLI transcription factors which releases the GLI proteins from PRKACA-mediated inhibition and allows for transcriptional activation of hedgehog pathway target genes. Required for the accumulation of KIF7, GLI2 and GLI3 in the cilia. Interacts with DLG5 at the ciliary base to induce the accumulation of KIF7 and GLI2 at the ciliary tip for GLI2 activation. This Rattus norvegicus (Rat) protein is Protein smoothened (Smo).